Here is a 322-residue protein sequence, read N- to C-terminus: 4-hydroxythreonine-4-phosphate dehydrogenase (322 aa).

Substrate contacts are provided by histidine 126 and threonine 127. Histidine 160, histidine 205, and histidine 260 together coordinate a divalent metal cation. Lysine 268, asparagine 277, and arginine 286 together coordinate substrate.

Belongs to the PdxA family. In terms of assembly, homodimer. It depends on Zn(2+) as a cofactor. Mg(2+) serves as cofactor. The cofactor is Co(2+).

It is found in the cytoplasm. The enzyme catalyses 4-(phosphooxy)-L-threonine + NAD(+) = 3-amino-2-oxopropyl phosphate + CO2 + NADH. Its pathway is cofactor biosynthesis; pyridoxine 5'-phosphate biosynthesis; pyridoxine 5'-phosphate from D-erythrose 4-phosphate: step 4/5. Its function is as follows. Catalyzes the NAD(P)-dependent oxidation of 4-(phosphooxy)-L-threonine (HTP) into 2-amino-3-oxo-4-(phosphooxy)butyric acid which spontaneously decarboxylates to form 3-amino-2-oxopropyl phosphate (AHAP). This is 4-hydroxythreonine-4-phosphate dehydrogenase from Paracoccus denitrificans (strain Pd 1222).